We begin with the raw amino-acid sequence, 130 residues long: Small ribosomal subunit protein uS8 (130 aa).

The protein belongs to the universal ribosomal protein uS8 family. Part of the 30S ribosomal subunit.

Its function is as follows. One of the primary rRNA binding proteins, it binds directly to 16S rRNA central domain where it helps coordinate assembly of the platform of the 30S subunit. In Thermococcus kodakarensis (strain ATCC BAA-918 / JCM 12380 / KOD1) (Pyrococcus kodakaraensis (strain KOD1)), this protein is Small ribosomal subunit protein uS8.